The chain runs to 225 residues: NAD(P)H-quinone oxidoreductase subunit K, chloroplastic (225 aa).

[4Fe-4S] cluster-binding residues include cysteine 43, cysteine 44, cysteine 108, and cysteine 139.

The protein belongs to the complex I 20 kDa subunit family. In terms of assembly, NDH is composed of at least 16 different subunits, 5 of which are encoded in the nucleus. It depends on [4Fe-4S] cluster as a cofactor.

The protein localises to the plastid. It localises to the chloroplast thylakoid membrane. It carries out the reaction a plastoquinone + NADH + (n+1) H(+)(in) = a plastoquinol + NAD(+) + n H(+)(out). It catalyses the reaction a plastoquinone + NADPH + (n+1) H(+)(in) = a plastoquinol + NADP(+) + n H(+)(out). Functionally, NDH shuttles electrons from NAD(P)H:plastoquinone, via FMN and iron-sulfur (Fe-S) centers, to quinones in the photosynthetic chain and possibly in a chloroplast respiratory chain. The immediate electron acceptor for the enzyme in this species is believed to be plastoquinone. Couples the redox reaction to proton translocation, and thus conserves the redox energy in a proton gradient. This is NAD(P)H-quinone oxidoreductase subunit K, chloroplastic from Platanus occidentalis (Sycamore).